The primary structure comprises 246 residues: tRNA pseudouridine synthase A (246 aa).

Asp-53 serves as the catalytic Nucleophile. Tyr-111 contacts substrate.

The protein belongs to the tRNA pseudouridine synthase TruA family. Homodimer.

The catalysed reaction is uridine(38/39/40) in tRNA = pseudouridine(38/39/40) in tRNA. Formation of pseudouridine at positions 38, 39 and 40 in the anticodon stem and loop of transfer RNAs. This chain is tRNA pseudouridine synthase A, found in Anoxybacillus flavithermus (strain DSM 21510 / WK1).